Consider the following 268-residue polypeptide: MATLELRNTSSVTPPVQLRNVVRQFGPQRVIDGLDLDIAAGEFVALLGASGSGKTTLLRTLAGLDDIDSGELRVPVARAAVFQEPRLMPWKSAWKNVVLGLRINDAKARAEAALTEVGLAHRLNAFPATLSGGEAQRVALARGLVREPKLLLLDEPFAALDALTRIRMHQLIIDLWRKHTPAVLLVTHDVDEAILLADRVIVLADGKLADDIRVDLPRQRDSGQAGFQSIRSRLLGLLGVKTQAADTATQEPARDVTLSALRRFANAR.

The region spanning Val16–Ile230 is the ABC transporter domain. Gly48–Thr55 is a binding site for ATP.

This sequence belongs to the ABC transporter superfamily. Aliphatic sulfonates importer (TC 3.A.1.17.2) family. In terms of assembly, the complex is composed of two ATP-binding proteins (SsuB), two transmembrane proteins (SsuC) and a solute-binding protein (SsuA).

The protein resides in the cell inner membrane. The catalysed reaction is ATP + H2O + aliphatic sulfonate-[sulfonate-binding protein]Side 1 = ADP + phosphate + aliphatic sulfonateSide 2 + [sulfonate-binding protein]Side 1.. Part of the ABC transporter complex SsuABC involved in aliphatic sulfonates import. Responsible for energy coupling to the transport system. This Pseudomonas savastanoi pv. phaseolicola (strain 1448A / Race 6) (Pseudomonas syringae pv. phaseolicola (strain 1448A / Race 6)) protein is Aliphatic sulfonates import ATP-binding protein SsuB 2.